The primary structure comprises 62 residues: LTCLICPEKYCNKVHTCLNGENICFKRFNRILGKRYDLGCAATCPTVKTGIVQCCSTDKCNH.

Disulfide bonds link Cys3-Cys24, Cys6-Cys11, Cys17-Cys40, Cys44-Cys54, and Cys55-Cys60.

Belongs to the three-finger toxin family. Ancestral subfamily. Orphan group II sub-subfamily. As to expression, expressed by the venom gland.

It localises to the secreted. In terms of biological role, binds with low affinity to muscular (alpha-1-beta-1-delta-epsilon/CHRNA1-CHRNB1-CHRND-CHRNE) and very low affinity to neuronal (alpha-7/CHRNA7) nicotinic acetylcholine receptor (nAChR). The sequence is that of Weak neurotoxin 5 from Naja naja (Indian cobra).